We begin with the raw amino-acid sequence, 68 residues long: KCNQ1 downstream neighbor protein (68 aa).

A disordered region spans residues 28-68 (GVASGCSPSKASQEARGKEKCPTLNGQPQWSALFTLPPQRE).

As to expression, shows reduced expression in Wilms' tumor samples.

This Homo sapiens (Human) protein is KCNQ1 downstream neighbor protein (KCNQ1DN).